Consider the following 286-residue polypeptide: ATP synthase gamma chain (286 aa).

Belongs to the ATPase gamma chain family. As to quaternary structure, F-type ATPases have 2 components, CF(1) - the catalytic core - and CF(0) - the membrane proton channel. CF(1) has five subunits: alpha(3), beta(3), gamma(1), delta(1), epsilon(1). CF(0) has three main subunits: a, b and c.

Its subcellular location is the cell inner membrane. Functionally, produces ATP from ADP in the presence of a proton gradient across the membrane. The gamma chain is believed to be important in regulating ATPase activity and the flow of protons through the CF(0) complex. The polypeptide is ATP synthase gamma chain (Dechloromonas aromatica (strain RCB)).